The primary structure comprises 425 residues: Enolase (425 aa).

Gln163 is a binding site for (2R)-2-phosphoglycerate. Glu205 (proton donor) is an active-site residue. Mg(2+) is bound by residues Asp242, Glu286, and Asp313. Residues Lys338, Arg367, Ser368, and Lys389 each contribute to the (2R)-2-phosphoglycerate site. Catalysis depends on Lys338, which acts as the Proton acceptor.

The protein belongs to the enolase family. The cofactor is Mg(2+).

It localises to the cytoplasm. Its subcellular location is the secreted. The protein resides in the cell surface. It catalyses the reaction (2R)-2-phosphoglycerate = phosphoenolpyruvate + H2O. The protein operates within carbohydrate degradation; glycolysis; pyruvate from D-glyceraldehyde 3-phosphate: step 4/5. In terms of biological role, catalyzes the reversible conversion of 2-phosphoglycerate (2-PG) into phosphoenolpyruvate (PEP). It is essential for the degradation of carbohydrates via glycolysis. The sequence is that of Enolase from Lactobacillus delbrueckii subsp. bulgaricus (strain ATCC 11842 / DSM 20081 / BCRC 10696 / JCM 1002 / NBRC 13953 / NCIMB 11778 / NCTC 12712 / WDCM 00102 / Lb 14).